The chain runs to 468 residues: Sulfate adenylyltransferase subunit 1 (468 aa).

The 218-residue stretch at 22-239 (KELLRFLTCG…TVEIASDKNA (218 aa)) folds into the tr-type G domain. The G1 stretch occupies residues 31–38 (GSVDDGKS). 31–38 (GSVDDGKS) contacts GTP. Residues 89–93 (GITID) are G2. Residues 110 to 113 (DTPG) form a G3 region. Residues 110 to 114 (DTPGH) and 165 to 168 (NKMD) contribute to the GTP site. The segment at 165-168 (NKMD) is G4. A G5 region spans residues 202 to 204 (SAL).

Belongs to the TRAFAC class translation factor GTPase superfamily. Classic translation factor GTPase family. CysN/NodQ subfamily. Heterodimer composed of CysD, the smaller subunit, and CysN.

The catalysed reaction is sulfate + ATP + H(+) = adenosine 5'-phosphosulfate + diphosphate. The protein operates within sulfur metabolism; hydrogen sulfide biosynthesis; sulfite from sulfate: step 1/3. In terms of biological role, with CysD forms the ATP sulfurylase (ATPS) that catalyzes the adenylation of sulfate producing adenosine 5'-phosphosulfate (APS) and diphosphate, the first enzymatic step in sulfur assimilation pathway. APS synthesis involves the formation of a high-energy phosphoric-sulfuric acid anhydride bond driven by GTP hydrolysis by CysN coupled to ATP hydrolysis by CysD. This is Sulfate adenylyltransferase subunit 1 from Teredinibacter turnerae (strain ATCC 39867 / T7901).